We begin with the raw amino-acid sequence, 289 residues long: HTH-type transcriptional activator AmpR (289 aa).

The HTH lysR-type domain maps to 6–63; it reads LPLNALRVFEVAMRQGSFTKAAIELRVTQAAVSHQVARLEDLLGTALFLRTSQGLIPT. Residues 23–42 constitute a DNA-binding region (H-T-H motif); that stretch reads FTKAAIELRVTQAAVSHQVA.

This sequence belongs to the LysR transcriptional regulatory family.

It is found in the cytoplasm. This protein is a positive regulator of gene expression of cephalosporinase (AmpC). This chain is HTH-type transcriptional activator AmpR (ampR), found in Rhodobacter capsulatus (Rhodopseudomonas capsulata).